Reading from the N-terminus, the 235-residue chain is Eukaryotic translation initiation factor 4E-1 (235 aa).

Residues 1–16 show a composition bias toward basic and acidic residues; the sequence is MAVEDTPKSVVTEEAK. Residues 1–59 are disordered; it reads MAVEDTPKSVVTEEAKPNSIENPIDRYHEEGDDAEEGEIAGGEGDGNVDESSKSGVPES. EIF4G-binding regions lie at residues 60–63 and 70–106; these read HPLE and FDNP…NNMK. MRNA-binding positions include 78 to 83, Lys-110, and 128 to 129; these read KQTSWG and WE. Cys-133 and Cys-171 form a disulfide bridge. The segment at 154 to 163 is EIF4G-binding; that stretch reads YTLLALIGEQ. Residues 178–183 and 223–227 each bind mRNA; these read RGKQER and KKLDR.

Belongs to the eukaryotic initiation factor 4E family. As to quaternary structure, EIF4F is a multi-subunit complex, the composition of which varies with external and internal environmental conditions. It is composed of at least EIF4A, EIF4E and EIF4G. EIF4E is also known to interact with other partners. In higher plants two isoforms of EIF4F have been identified, named isoform EIF4F and isoform EIF(iso)4F. Isoform EIF4F has subunits p220 and p26, whereas isoform EIF(iso)4F has subunits p82 and p28. Interacts directly with EXA1. (Microbial infection) Interacts with viral genome-linked protein (VPg); this interaction is possible in susceptible hosts but impaired in resistant plants. In terms of processing, according to the redox status, the Cys-133-Cys-171 disulfide bridge may have a role in regulating protein function by affecting its ability to bind capped mRNA. In terms of tissue distribution, expressed in all tissues except in the cells of the specialization zone of the roots.

Its subcellular location is the nucleus. The protein localises to the cytoplasm. Functionally, component of the protein complex eIF4F, which is involved in the recognition of the mRNA cap, ATP-dependent unwinding of 5'-terminal secondary structure and recruitment of mRNA to the ribosome. Recognizes and binds the 7-methylguanosine-containing mRNA cap during an early step in the initiation of protein synthesis and facilitates ribosome binding by inducing the unwinding of the mRNAs secondary structures. Key component of recessive resistance to potyviruses. In terms of biological role, (Microbial infection) Susceptibility host factor required for viral infection by recruiting viral RNAs to the host ribosomal complex via an interaction with viral genome-linked protein (VPg). This is Eukaryotic translation initiation factor 4E-1 from Arabidopsis thaliana (Mouse-ear cress).